Here is a 259-residue protein sequence, read N- to C-terminus: Undecaprenyl-diphosphatase (259 aa).

The next 7 membrane-spanning stretches (helical) occupy residues M1–I21, Q40–W60, W75–E95, L101–L121, S179–L199, L206–I226, and T239–F259.

It belongs to the UppP family.

It localises to the cell inner membrane. The enzyme catalyses di-trans,octa-cis-undecaprenyl diphosphate + H2O = di-trans,octa-cis-undecaprenyl phosphate + phosphate + H(+). Catalyzes the dephosphorylation of undecaprenyl diphosphate (UPP). Confers resistance to bacitracin. The sequence is that of Undecaprenyl-diphosphatase from Halothermothrix orenii (strain H 168 / OCM 544 / DSM 9562).